A 272-amino-acid chain; its full sequence is Bis(5'-nucleosyl)-tetraphosphatase, symmetrical (272 aa).

Belongs to the Ap4A hydrolase family.

The enzyme catalyses P(1),P(4)-bis(5'-adenosyl) tetraphosphate + H2O = 2 ADP + 2 H(+). Hydrolyzes diadenosine 5',5'''-P1,P4-tetraphosphate to yield ADP. This chain is Bis(5'-nucleosyl)-tetraphosphatase, symmetrical, found in Chromohalobacter salexigens (strain ATCC BAA-138 / DSM 3043 / CIP 106854 / NCIMB 13768 / 1H11).